A 166-amino-acid chain; its full sequence is Large ribosomal subunit protein uL10 (166 aa).

The protein belongs to the universal ribosomal protein uL10 family. In terms of assembly, part of the ribosomal stalk of the 50S ribosomal subunit. The N-terminus interacts with L11 and the large rRNA to form the base of the stalk. The C-terminus forms an elongated spine to which L12 dimers bind in a sequential fashion forming a multimeric L10(L12)X complex.

Functionally, forms part of the ribosomal stalk, playing a central role in the interaction of the ribosome with GTP-bound translation factors. In Neisseria meningitidis serogroup A / serotype 4A (strain DSM 15465 / Z2491), this protein is Large ribosomal subunit protein uL10 (rplJ).